Here is a 105-residue protein sequence, read N- to C-terminus: Mini zinc finger protein 2 (105 aa).

Positions 1 to 29 (MGPQQDRSAAKPYANGSTAAAAAAGRKEN) are disordered. A ZF-HD dimerization-type; degenerate zinc finger spans residues 35–84 (YRECQRNHAASIGGHAVDGCREFMASGADGTAAALLCAACGCHQSFHRRE).

In terms of assembly, homo- and heterodimers.

It is found in the cytoplasm. Its function is as follows. Inhibits zinc finger homeodomain (ZHD) transcription factors, by interacting with them to prevent both their nuclear localization and their DNA-binding properties. The polypeptide is Mini zinc finger protein 2 (MIF2) (Oryza sativa subsp. indica (Rice)).